The following is a 385-amino-acid chain: Tumor protein p53-inducible protein 13 (385 aa).

A signal peptide spans 1–27 (MVHPPPPPPRLLLVALVGLLSLREVVA). Topologically, residues 28–301 (EPAEEAGTPC…ARGPTPRTEE (274 aa)) are extracellular. A disordered region spans residues 242–297 (APVSLTTGGPGGNGRSRTEAQMPSGQGNHGGCACPGQVSPAPRAAGPPRVARGPTP). Low complexity predominate over residues 281–297 (PAPRAAGPPRVARGPTP). The chain crosses the membrane as a helical span at residues 302–322 (AAWAAMALTFLLVLLTLATLC). Topologically, residues 323 to 385 (TRLHRNFRRS…DSGPDSESSD (63 aa)) are cytoplasmic. Basic residues predominate over residues 359–369 (SRRIKRSRRRP). A disordered region spans residues 359–385 (SRRIKRSRRRPLLPPTPDSGPDSESSD).

The protein localises to the cell membrane. It localises to the cytoplasm. Functionally, may act as a tumor suppressor. Inhibits tumor cell growth, when overexpressed. The protein is Tumor protein p53-inducible protein 13 (Tp53i13) of Mus musculus (Mouse).